The primary structure comprises 352 residues: Ubiquitin thioesterase otulin (352 aa).

The interval Met-1–Pro-48 is disordered. Low complexity predominate over residues Ala-18 to Ala-37. The PIM motif motif lies at Glu-52–Arg-57. Tyr-56 carries the post-translational modification Phosphotyrosine. Linear diubiquitin binding regions lie at residues Glu-95–Trp-96 and Arg-124–Asp-126. Residues Thr-118 to Val-346 enclose the OTU domain. The active site involves Asp-126. Residue Cys-129 is the Nucleophile of the active site. 3 linear diubiquitin binding regions span residues Phe-255–Leu-259, Thr-283–Val-289, and Asp-336–Arg-338. His-339 is a catalytic residue.

It belongs to the peptidase C65 family. Otulin subfamily. In terms of assembly, interacts (via the PUB domain) with RNF31 (via the PIM motif); the interaction is direct. Interacts with DVL2. In terms of processing, ubiquitinated. Acetylated. Post-translationally, phosphorylated. Phosphorylation at Tyr-56 prevents interaction with RNF31; dephosphorylation promotes interaction with RNF31 and the LUBAC complex.

The protein localises to the cytoplasm. The catalysed reaction is Thiol-dependent hydrolysis of ester, thioester, amide, peptide and isopeptide bonds formed by the C-terminal Gly of ubiquitin (a 76-residue protein attached to proteins as an intracellular targeting signal).. Its function is as follows. Deubiquitinase that specifically removes linear ('Met-1'-linked) polyubiquitin chains to substrates and acts as a regulator of angiogenesis and innate immune response. Required during angiogenesis, craniofacial and neuronal development by regulating the canonical Wnt signaling together with the LUBAC complex. Acts as a negative regulator of NF-kappa-B by regulating the activity of the LUBAC complex. OTULIN function is mainly restricted to homeostasis of the LUBAC complex: acts by removing 'Met-1'-linked autoubiquitination of the LUBAC complex, thereby preventing inactivation of the LUBAC complex. Acts as a key negative regulator of inflammation by restricting spontaneous inflammation and maintaining immune homeostasis. In myeloid cell, required to prevent unwarranted secretion of cytokines leading to inflammation and autoimmunity by restricting linear polyubiquitin formation. Plays a role in innate immune response by restricting linear polyubiquitin formation on LUBAC complex in response to NOD2 stimulation, probably to limit NOD2-dependent pro-inflammatory signaling. This chain is Ubiquitin thioesterase otulin, found in Homo sapiens (Human).